Consider the following 779-residue polypeptide: Potassium/sodium hyperpolarization-activated cyclic nucleotide-gated channel 3 (779 aa).

The segment at 1 to 47 is disordered; the sequence is MEEEARPAAGAGEAATPARETPPAAPAQARAASGGVPESAPEPKRRQ. Topologically, residues 1–96 are cytoplasmic; the sequence is MEEEARPAAG…PYSDFRFYWD (96 aa). Over residues 7-32 the composition is skewed to low complexity; that stretch reads PAAGAGEAATPARETPPAAPAQARAA. Positions 45–90 are involved in subunit assembly; sequence RRQLGTLLQPTVNKFSLRVFGSHKAVEIEQERVKSAGAWIIHPYSD. Residues 97-117 form a helical membrane-spanning segment; the sequence is LIMLLLMVGNLIVLPVGITFF. The Extracellular portion of the chain corresponds to 118-123; it reads KEENSP. A helical membrane pass occupies residues 124–144; that stretch reads PWIVFNVLSDTFFLLDLVLNF. Residues 145-170 are Cytoplasmic-facing; sequence RTGIVVEEGAEILLAPRAIRTRYLRT. Residues 171–191 traverse the membrane as a helical segment; it reads WFLVDLISSIPVDYIFLVVEL. Residues 192-200 lie on the Extracellular side of the membrane; the sequence is EPRLDAEVY. Residues 201-221 form a helical; Voltage-sensor membrane-spanning segment; that stretch reads KTARALRIVRFTKILSLLRLL. Residues 222-252 are Cytoplasmic-facing; it reads RLSRLIRYIHQWEEIFHMTYDLASAVVRIFN. A helical membrane pass occupies residues 253 to 273; that stretch reads LIGMMLLLCHWDGCLQFLVPM. At 274-296 the chain is on the extracellular side; it reads LQDFPSDCWVSMNRMVNHSWGRQ. Residue N290 is glycosylated (N-linked (GlcNAc...) asparagine). Positions 297–318 form an intramembrane region, pore-forming; the sequence is YSHALFKAMSHMLCIGYGQQAP. The Extracellular portion of the chain corresponds to 319–328; sequence VGMPDVWLTM. A helical membrane pass occupies residues 329–349; it reads LSMIVGATCYAMFIGHATALI. The Cytoplasmic segment spans residues 350-779; that stretch reads QSLDSSRRQY…PRGPQISANM (430 aa). Residues 353–779 form an interaction with KCTD3 region; that stretch reads DSSRRQYQEK…PRGPQISANM (427 aa). 7 residues coordinate 3',5'-cyclic AMP: G491, E492, C494, R501, T502, R542, and R545. The interval 549-569 is disordered; it reads KNSILQRKRSEPSPGSSGGVM. Residue S633 is modified to Phosphoserine. Over residues 687-697 the composition is skewed to polar residues; sequence SLSRTGRSQVS. Residues 687–779 are disordered; that stretch reads SLSRTGRSQV…PRGPQISANM (93 aa).

It belongs to the potassium channel HCN family. In terms of assembly, homotetramer. The potassium channel is composed of a homo- or heterotetrameric complex of pore-forming subunits. Interacts with HCN1. Interacts with KCTD3; this interaction increases cell surface expression and current density of this channel. Interacts with PEX5L. Detected in hypothalamus, amygdala, olfactory bulb, hippocampus and retina (at protein level). Highly expressed in brain and heart, in particular in ventricle, atrium and in sinoatrial node (SAN). Detected at low levels in skeletal muscle and lung. Expressed in DRG neurons.

The protein resides in the cell membrane. The enzyme catalyses K(+)(in) = K(+)(out). It carries out the reaction Na(+)(in) = Na(+)(out). With respect to regulation, unlike HCN2 and HCN4, HCN3 is insensitive to cyclic nucleotides, such as cAMP or cGMP. This lack of sensitivity of HCN3, despite harboring a functional cyclic nucleotide-binding domain (CNBD), may be explained by its shorter C-terminal sequence, which may alter the normal autoinhibition of the channel. Inhibited by Cs(1+) and ivabradine. Phosphatidylinositol-4,5-bisphosphate (PIP(2)) shifts HCN3 activation to more depolarized potentials and accelerated activation kinetics. Functionally, hyperpolarization-activated ion channel that are permeable to sodium and potassium ions, with an about 3:1 preference for potassium ions. Contributes to the native pacemaker currents in heart (If) and in neurons (Ih). In particular, plays a pivotal role in maintaining excitability and promoting rhythmic burst firing within hypothalamic nuclei. Exerts a significant influence on the configuration of the cardiac action potential waveform. Does not appear to play a prominent role in the processing of acute, neuropathic, or inflammatory pain. In Mus musculus (Mouse), this protein is Potassium/sodium hyperpolarization-activated cyclic nucleotide-gated channel 3 (Hcn3).